The chain runs to 990 residues: Aconitate hydratase 3, mitochondrial (990 aa).

The N-terminal 78 residues, 1 to 78, are a transit peptide targeting the mitochondrion; sequence MYLTASSSAS…PFRFTSQIRA (78 aa). S91 carries the phosphoserine modification. Substrate is bound by residues Q182 and 301–303; that span reads DSH. [4Fe-4S] cluster-binding residues include C533, C599, and C602. Substrate contacts are provided by residues R632, R637, R795, and 876 to 877; that span reads SR.

The protein belongs to the aconitase/IPM isomerase family. Monomer. Interacts with B'GAMMA in the cytosol. Requires [4Fe-4S] cluster as cofactor. In terms of processing, phosphorylated at Ser-91 in the cytoplasm; this phosphorylation requires the presence of B'GAMMA. In terms of tissue distribution, major aconitase isoenzyme in young seedlings. Expressed in roots, leaves, stems and flowers, and, at low levels, in seeds.

It is found in the mitochondrion. The protein localises to the cytoplasm. The catalysed reaction is citrate = D-threo-isocitrate. The protein operates within carbohydrate metabolism; tricarboxylic acid cycle; isocitrate from oxaloacetate: step 2/2. In terms of biological role, catalyzes the isomerization of citrate to isocitrate via cis-aconitate. Contributes to oxidative stress tolerance. Modulates cytosolic citrate metabolism during lipid mobilization. Required during seedling growth. In Arabidopsis thaliana (Mouse-ear cress), this protein is Aconitate hydratase 3, mitochondrial.